The primary structure comprises 78 residues: Acyl carrier protein (78 aa).

Residues 2–77 (SDVLERVSKI…DAVKFISEKV (76 aa)) enclose the Carrier domain. An O-(pantetheine 4'-phosphoryl)serine modification is found at Ser37.

This sequence belongs to the acyl carrier protein (ACP) family. In terms of processing, 4'-phosphopantetheine is transferred from CoA to a specific serine of apo-ACP by AcpS. This modification is essential for activity because fatty acids are bound in thioester linkage to the sulfhydryl of the prosthetic group.

The protein localises to the cytoplasm. It functions in the pathway lipid metabolism; fatty acid biosynthesis. In terms of biological role, carrier of the growing fatty acid chain in fatty acid biosynthesis. In Maricaulis maris (strain MCS10) (Caulobacter maris), this protein is Acyl carrier protein.